The following is a 293-amino-acid chain: Formamidopyrimidine-DNA glycosylase (293 aa).

Residue P2 is the Schiff-base intermediate with DNA of the active site. E3 acts as the Proton donor in catalysis. K61 functions as the Proton donor; for beta-elimination activity in the catalytic mechanism. DNA contacts are provided by H104, R123, and K169. The FPG-type zinc-finger motif lies at 255 to 289 (DAYGREGEPCRRCGAIMRRDKFMNRSSFYCPRCQP). The active-site Proton donor; for delta-elimination activity is R279.

Belongs to the FPG family. As to quaternary structure, monomer. Zn(2+) is required as a cofactor.

It carries out the reaction Hydrolysis of DNA containing ring-opened 7-methylguanine residues, releasing 2,6-diamino-4-hydroxy-5-(N-methyl)formamidopyrimidine.. The catalysed reaction is 2'-deoxyribonucleotide-(2'-deoxyribose 5'-phosphate)-2'-deoxyribonucleotide-DNA = a 3'-end 2'-deoxyribonucleotide-(2,3-dehydro-2,3-deoxyribose 5'-phosphate)-DNA + a 5'-end 5'-phospho-2'-deoxyribonucleoside-DNA + H(+). Functionally, involved in base excision repair of DNA damaged by oxidation or by mutagenic agents. Acts as a DNA glycosylase that recognizes and removes damaged bases. Has a preference for oxidized purines, such as 7,8-dihydro-8-oxoguanine (8-oxoG). Has AP (apurinic/apyrimidinic) lyase activity and introduces nicks in the DNA strand. Cleaves the DNA backbone by beta-delta elimination to generate a single-strand break at the site of the removed base with both 3'- and 5'-phosphates. The protein is Formamidopyrimidine-DNA glycosylase of Mycolicibacterium vanbaalenii (strain DSM 7251 / JCM 13017 / BCRC 16820 / KCTC 9966 / NRRL B-24157 / PYR-1) (Mycobacterium vanbaalenii).